Here is a 350-residue protein sequence, read N- to C-terminus: Pleckstrin (350 aa).

The region spanning 4 to 101 (KRIREGYLVK…WVRDIKKAIK (98 aa)) is the PH 1 domain. At Lys-64 the chain carries N6-acetyllysine. Phosphoserine is present on residues Ser-113 and Ser-117. The region spanning 136–221 (PEKGIKELNL…NPDAFYYFPD (86 aa)) is the DEP domain. The PH 2 domain occupies 244-347 (IIIKQGCLLK…WIKAIQVASR (104 aa)).

In terms of biological role, major protein kinase C substrate of platelets. In Rattus norvegicus (Rat), this protein is Pleckstrin (Plek).